Here is a 203-residue protein sequence, read N- to C-terminus: MTQYTFSPKDFKAFEVEGLDQRMEALNDYVRPQLHQLGSYFEEYFTTQTGETFYAHVAKHARRSVNPPIDTWVAFAPNKRGYKMLPHFQIGLFRNQLFIMFGIMHEGRNKEEKVKIFDKHFDKLTSLPSDYSVSLDHMKTEKHYIKDMSNEELHAAIDRVKNVKKGEFFVARTLSPTDKRLKSDKSFLKFVEETFDEFLKFYQ.

The protein belongs to the UPF0637 family.

This is UPF0637 protein SERP0693 from Staphylococcus epidermidis (strain ATCC 35984 / DSM 28319 / BCRC 17069 / CCUG 31568 / BM 3577 / RP62A).